The primary structure comprises 56 residues: Attractin (56 aa).

Disulfide bonds link Cys4–Cys41, Cys13–Cys33, and Cys20–Cys26. The N-linked (GlcNAc...) asparagine glycan is linked to Asn25.

Produced by the albumen gland of the egg cordons.

The protein resides in the secreted. Its function is as follows. Water-borne pheromone that attract the marine mollusk Aplysia into breeding aggregations and coordinate male and female reproductive behavior within the aggregation. The sequence is that of Attractin (ATT) from Aplysia depilans (Sea hare).